A 948-amino-acid polypeptide reads, in one-letter code: Valine--tRNA ligase (948 aa).

Positions 40 to 50 (PNVTGSLHMGH) match the 'HIGH' region motif. The 'KMSKS' region signature appears at 551-555 (KMSKS). Lysine 554 serves as a coordination point for ATP. Residues 879 to 947 (LIDKGAELAR…LAEQHARISS (69 aa)) are a coiled coil.

This sequence belongs to the class-I aminoacyl-tRNA synthetase family. ValS type 1 subfamily. As to quaternary structure, monomer.

It localises to the cytoplasm. It carries out the reaction tRNA(Val) + L-valine + ATP = L-valyl-tRNA(Val) + AMP + diphosphate. Its function is as follows. Catalyzes the attachment of valine to tRNA(Val). As ValRS can inadvertently accommodate and process structurally similar amino acids such as threonine, to avoid such errors, it has a 'posttransfer' editing activity that hydrolyzes mischarged Thr-tRNA(Val) in a tRNA-dependent manner. This Pseudomonas fluorescens (strain ATCC BAA-477 / NRRL B-23932 / Pf-5) protein is Valine--tRNA ligase.